The following is a 142-amino-acid chain: Large ribosomal subunit protein uL11 (142 aa).

The protein belongs to the universal ribosomal protein uL11 family. As to quaternary structure, part of the ribosomal stalk of the 50S ribosomal subunit. Interacts with L10 and the large rRNA to form the base of the stalk. L10 forms an elongated spine to which L12 dimers bind in a sequential fashion forming a multimeric L10(L12)X complex. Post-translationally, one or more lysine residues are methylated.

Functionally, forms part of the ribosomal stalk which helps the ribosome interact with GTP-bound translation factors. The polypeptide is Large ribosomal subunit protein uL11 (Vibrio vulnificus (strain CMCP6)).